The following is a 222-amino-acid chain: Type II restriction enzyme MjaI (222 aa).

The enzyme catalyses Endonucleolytic cleavage of DNA to give specific double-stranded fragments with terminal 5'-phosphates.. A P subtype restriction enzyme that recognizes the double-stranded sequence 5'-CTAG-3'; the cleavage site is unknown. The sequence is that of Type II restriction enzyme MjaI (mjaIR) from Methanocaldococcus jannaschii (strain ATCC 43067 / DSM 2661 / JAL-1 / JCM 10045 / NBRC 100440) (Methanococcus jannaschii).